We begin with the raw amino-acid sequence, 658 residues long: Threonine--tRNA ligase (658 aa).

Residues 1-61 (MSDVRVIIQR…KDGEEVEPVQ (61 aa)) enclose the TGS domain. The interval 259 to 554 (DHRKLGNELD…LLEHYAGAFP (296 aa)) is catalytic. 3 residues coordinate Zn(2+): Cys353, His404, and His531.

It belongs to the class-II aminoacyl-tRNA synthetase family. Homodimer. It depends on Zn(2+) as a cofactor.

It is found in the cytoplasm. The catalysed reaction is tRNA(Thr) + L-threonine + ATP = L-threonyl-tRNA(Thr) + AMP + diphosphate + H(+). Functionally, catalyzes the attachment of threonine to tRNA(Thr) in a two-step reaction: L-threonine is first activated by ATP to form Thr-AMP and then transferred to the acceptor end of tRNA(Thr). Also edits incorrectly charged L-seryl-tRNA(Thr). This Streptomyces avermitilis (strain ATCC 31267 / DSM 46492 / JCM 5070 / NBRC 14893 / NCIMB 12804 / NRRL 8165 / MA-4680) protein is Threonine--tRNA ligase.